The primary structure comprises 274 residues: Tryptophan synthase alpha chain (274 aa).

Catalysis depends on proton acceptor residues Glu49 and Asp60.

The protein belongs to the TrpA family. Tetramer of two alpha and two beta chains.

The enzyme catalyses (1S,2R)-1-C-(indol-3-yl)glycerol 3-phosphate + L-serine = D-glyceraldehyde 3-phosphate + L-tryptophan + H2O. The protein operates within amino-acid biosynthesis; L-tryptophan biosynthesis; L-tryptophan from chorismate: step 5/5. Functionally, the alpha subunit is responsible for the aldol cleavage of indoleglycerol phosphate to indole and glyceraldehyde 3-phosphate. The protein is Tryptophan synthase alpha chain of Alkalilimnicola ehrlichii (strain ATCC BAA-1101 / DSM 17681 / MLHE-1).